The following is a 702-amino-acid chain: Elongation factor G (702 aa).

One can recognise a tr-type G domain in the interval 9–292; the sequence is DRTRNIGIMA…AVVDYLPSPL (284 aa). GTP-binding positions include 18–25, 91–95, and 145–148; these read AHIDAGKT, DTPGH, and NKMD.

It belongs to the TRAFAC class translation factor GTPase superfamily. Classic translation factor GTPase family. EF-G/EF-2 subfamily.

The protein localises to the cytoplasm. In terms of biological role, catalyzes the GTP-dependent ribosomal translocation step during translation elongation. During this step, the ribosome changes from the pre-translocational (PRE) to the post-translocational (POST) state as the newly formed A-site-bound peptidyl-tRNA and P-site-bound deacylated tRNA move to the P and E sites, respectively. Catalyzes the coordinated movement of the two tRNA molecules, the mRNA and conformational changes in the ribosome. This is Elongation factor G from Oenococcus oeni (strain ATCC BAA-331 / PSU-1).